The chain runs to 807 residues: Probable dimethyl sulfoxide reductase chain YnfF (807 aa).

Positions Met-1–Ala-45 form a signal peptide, tat-type signal. A 4Fe-4S Mo/W bis-MGD-type domain is found at Glu-52–Asp-113. [4Fe-4S] cluster contacts are provided by Cys-59, Cys-63, Cys-67, and Cys-99. Ser-195 is a binding site for Mo-bis(molybdopterin guanine dinucleotide).

The protein belongs to the prokaryotic molybdopterin-containing oxidoreductase family. In terms of assembly, the complex consists of three subunits: YnfF, the reductase; YnfG, an electron transfer protein, and YnfH, a membrane anchor protein. The cofactor is [4Fe-4S] cluster. It depends on Mo-bis(molybdopterin guanine dinucleotide) as a cofactor. Post-translationally, exported by the Tat system. The position of the signal peptide cleavage has not been experimentally proven. Can also be exported by the Sec system.

It localises to the cell membrane. Terminal reductase during anaerobic growth on various sulfoxide and N-oxide compounds. This Escherichia coli (strain K12) protein is Probable dimethyl sulfoxide reductase chain YnfF (ynfF).